The chain runs to 170 residues: Large ribosomal subunit protein uL6m (170 aa).

The protein belongs to the universal ribosomal protein uL6 family.

The protein resides in the mitochondrion. This Dictyostelium discoideum (Social amoeba) protein is Large ribosomal subunit protein uL6m (mrpl6).